The primary structure comprises 278 residues: Polyamine aminopropyltransferase (278 aa).

Positions 3-240 (EGWFTEAVED…GWWSATLMVN (238 aa)) constitute a PABS domain. Q33 lines the S-methyl-5'-thioadenosine pocket. H64 and D88 together coordinate spermidine. S-methyl-5'-thioadenosine contacts are provided by residues E108 and 139–140 (DG). D158 (proton acceptor) is an active-site residue. Spermidine is bound at residue 158–161 (DSTD). P165 provides a ligand contact to S-methyl-5'-thioadenosine.

This sequence belongs to the spermidine/spermine synthase family. As to quaternary structure, homodimer or homotetramer.

The protein resides in the cytoplasm. The catalysed reaction is S-adenosyl 3-(methylsulfanyl)propylamine + putrescine = S-methyl-5'-thioadenosine + spermidine + H(+). It participates in amine and polyamine biosynthesis; spermidine biosynthesis; spermidine from putrescine: step 1/1. In terms of biological role, catalyzes the irreversible transfer of a propylamine group from the amino donor S-adenosylmethioninamine (decarboxy-AdoMet) to putrescine (1,4-diaminobutane) to yield spermidine. The polypeptide is Polyamine aminopropyltransferase (Halorhodospira halophila (strain DSM 244 / SL1) (Ectothiorhodospira halophila (strain DSM 244 / SL1))).